Reading from the N-terminus, the 152-residue chain is Ribosome maturation factor RimP (152 aa).

Belongs to the RimP family.

It localises to the cytoplasm. Required for maturation of 30S ribosomal subunits. This Pectobacterium atrosepticum (strain SCRI 1043 / ATCC BAA-672) (Erwinia carotovora subsp. atroseptica) protein is Ribosome maturation factor RimP.